The sequence spans 379 residues: Dual-specificity RNA methyltransferase RlmN (379 aa).

Glu-96 (proton acceptor) is an active-site residue. Residues 102–342 (TDDRGTLCVS…TRTTRGDDID (241 aa)) enclose the Radical SAM core domain. Cys-109 and Cys-345 are disulfide-bonded. The [4Fe-4S] cluster site is built by Cys-116, Cys-120, and Cys-123. S-adenosyl-L-methionine-binding positions include 170-171 (GE), Ser-202, 224-226 (SLH), and Asn-302. The active-site S-methylcysteine intermediate is Cys-345.

This sequence belongs to the radical SAM superfamily. RlmN family. [4Fe-4S] cluster is required as a cofactor.

It localises to the cytoplasm. The enzyme catalyses adenosine(2503) in 23S rRNA + 2 reduced [2Fe-2S]-[ferredoxin] + 2 S-adenosyl-L-methionine = 2-methyladenosine(2503) in 23S rRNA + 5'-deoxyadenosine + L-methionine + 2 oxidized [2Fe-2S]-[ferredoxin] + S-adenosyl-L-homocysteine. The catalysed reaction is adenosine(37) in tRNA + 2 reduced [2Fe-2S]-[ferredoxin] + 2 S-adenosyl-L-methionine = 2-methyladenosine(37) in tRNA + 5'-deoxyadenosine + L-methionine + 2 oxidized [2Fe-2S]-[ferredoxin] + S-adenosyl-L-homocysteine. In terms of biological role, specifically methylates position 2 of adenine 2503 in 23S rRNA and position 2 of adenine 37 in tRNAs. m2A2503 modification seems to play a crucial role in the proofreading step occurring at the peptidyl transferase center and thus would serve to optimize ribosomal fidelity. The protein is Dual-specificity RNA methyltransferase RlmN of Pseudomonas entomophila (strain L48).